The chain runs to 426 residues: Transcriptional enhancer factor TEF-1 (426 aa).

An N-acetylmethionine modification is found at Met1. Over residues Met1–Pro12 the composition is skewed to polar residues. The segment at Met1–Ala31 is disordered. Residue Ser11 is modified to Phosphoserine. Residues Asn15–Asp28 are compositionally biased toward basic and acidic residues. The segment at residues Asp28 to Asp104 is a DNA-binding region (TEA). An N6-lactoyllysine modification is found at Lys108. The segment at Gly167–Asp426 is transcriptional activation.

In terms of assembly, interacts with YAP1 and WWTR1/TAZ. Post-translationally, lactylation by AARS1 promotes nuclear localization and stabilization of YAP1, leading to increased Hippo signaling pathway. Delactylated by SIRT1. As to expression, preferentially expressed in skeletal muscle. Lower levels in pancreas, placenta, and heart.

Its subcellular location is the nucleus. Transcription factor which plays a key role in the Hippo signaling pathway, a pathway involved in organ size control and tumor suppression by restricting proliferation and promoting apoptosis. The core of this pathway is composed of a kinase cascade wherein MST1/MST2, in complex with its regulatory protein SAV1, phosphorylates and activates LATS1/2 in complex with its regulatory protein MOB1, which in turn phosphorylates and inactivates YAP1 oncoprotein and WWTR1/TAZ. Acts by mediating gene expression of YAP1 and WWTR1/TAZ, thereby regulating cell proliferation, migration and epithelial mesenchymal transition (EMT) induction. Binds specifically and cooperatively to the SPH and GT-IIC 'enhansons' (5'-GTGGAATGT-3') and activates transcription in vivo in a cell-specific manner. The activation function appears to be mediated by a limiting cell-specific transcriptional intermediary factor (TIF). Involved in cardiac development. Binds to the M-CAT motif. The sequence is that of Transcriptional enhancer factor TEF-1 (TEAD1) from Homo sapiens (Human).